Reading from the N-terminus, the 398-residue chain is FK506-binding protein 4 (398 aa).

3 disordered regions span residues 66-120 (EVDE…DEYE), 164-232 (VKHP…QLAK), and 245-288 (DLIA…KKNK). A compositionally biased stretch (acidic residues) spans 170 to 228 (EPLEDLYSDEDSEEYSDDELDQEIEEDDELDHDEASSEESDEDQEFYDAISEGDEDIDE). The span at 264–287 (PETKKSKKTKDEKNTKATENEKKN) shows a compositional bias: basic and acidic residues. Positions 312 to 398 (GSKVGMRYIG…TFDVKLVSLK (87 aa)) constitute a PPIase FKBP-type domain.

It belongs to the FKBP-type PPIase family. FKBP3/4 subfamily. Binds to histones H3 and H4.

Its subcellular location is the nucleus. It carries out the reaction [protein]-peptidylproline (omega=180) = [protein]-peptidylproline (omega=0). Inhibited by both FK506 and rapamycin. Functionally, PPIase that acts as a histone chaperone. Histone proline isomerase that increases the rate of cis-trans isomerization at prolines on the histone H3 N-terminal tail. Proline isomerization influences H3 methylation thereby regulating gene expression. The polypeptide is FK506-binding protein 4 (FPR4) (Candida glabrata (strain ATCC 2001 / BCRC 20586 / JCM 3761 / NBRC 0622 / NRRL Y-65 / CBS 138) (Yeast)).